A 794-amino-acid polypeptide reads, in one-letter code: Transcription factor TOG1 (794 aa).

Residues C18, C21, C28, C34, C37, and C44 each contribute to the Zn(2+) site. The zn(2)-C6 fungal-type DNA-binding region spans 18–44 (CDRCHRKKIKCNSKKPCFGCIGSQSKC).

It localises to the nucleus. Transcriptional activator required for growth on non-fermentable carbon sources and that regulates genes involved in fatty acid utilization. Acts as a direct activator that binds the promoters of oleate utilizing genes, encoded key enzymes in beta-oxidation and NADPH regeneration (POX1, FOX2,POT1 and IDP2), the glyoxylate shunt (MLS1 and ICL1), and gluconeogenesis (PCK1 and FBP1). Also regulates the abundance of peroxisomes that are vital for fatty acid oxidation. This Saccharomyces cerevisiae (strain ATCC 204508 / S288c) (Baker's yeast) protein is Transcription factor TOG1.